The sequence spans 190 residues: MDILKDKIRSEGIVLSEHVLKVDAFLNHQIDPQLMQQVGHAFATRFRDQGITKIVTIEASGIAPAVMAGLELGVPVIFARKYQSLTLKDNLYISKVFSFTKQTESTIAISAKHLNAHDHVLVIDDFLANGHAAKALIDLIGQAGASIAGLGIVIEKSFQDGRALLESEGYRVESLARVKSLAGGQVEFLD.

Xanthine-binding residues include Leu-20 and Asn-27. Position 128–132 (Ala-128–Ala-132) interacts with 5-phospho-alpha-D-ribose 1-diphosphate. Lys-156 contacts xanthine.

The protein belongs to the purine/pyrimidine phosphoribosyltransferase family. Xpt subfamily. As to quaternary structure, homodimer.

The protein localises to the cytoplasm. The enzyme catalyses XMP + diphosphate = xanthine + 5-phospho-alpha-D-ribose 1-diphosphate. Its pathway is purine metabolism; XMP biosynthesis via salvage pathway; XMP from xanthine: step 1/1. Its function is as follows. Converts the preformed base xanthine, a product of nucleic acid breakdown, to xanthosine 5'-monophosphate (XMP), so it can be reused for RNA or DNA synthesis. This is Xanthine phosphoribosyltransferase from Pseudomonas aeruginosa (strain ATCC 15692 / DSM 22644 / CIP 104116 / JCM 14847 / LMG 12228 / 1C / PRS 101 / PAO1).